Here is a 63-residue protein sequence, read N- to C-terminus: Conotoxin p5a (63 aa).

The N-terminal stretch at 1 to 19 (MRCLPVFVILLLLIPSAPC) is a signal peptide. Residues 20–50 (VDAHPKTKDDMPLASFHDNAKGTLQRFWKKR) constitute a propeptide that is removed on maturation. 2 cysteine pairs are disulfide-bonded: Cys52/Cys59 and Cys53/Cys60. Position 62 is a leucine amide (Leu62).

As to expression, expressed by the venom duct.

Its subcellular location is the secreted. Functionally, in vivo, low levels of the peptide injected into male specimens of the Siamese fighting fish causes an immediate aggressive display in this fish in response to their reflection when placed in a mirrored aquarium; High levels of the peptide suppressed this behavior. No effect is observed when injected into mice. The protein is Conotoxin p5a of Conus purpurascens (Purple cone).